We begin with the raw amino-acid sequence, 500 residues long: Trehalose-6-phosphate synthase (500 aa).

Arg28 is a binding site for D-glucose 6-phosphate. 48 to 49 (GG) lines the UDP-alpha-D-glucose pocket. Residues Tyr104 and Asp158 each coordinate D-glucose 6-phosphate. Positions 300 and 305 each coordinate UDP-alpha-D-glucose. A D-glucose 6-phosphate-binding site is contributed by Arg338. UDP-alpha-D-glucose is bound at residue 403 to 407 (LVAKE).

The protein belongs to the glycosyltransferase 20 family. Homotetramer.

It catalyses the reaction ADP-alpha-D-glucose + D-glucose 6-phosphate = alpha,alpha-trehalose 6-phosphate + ADP + H(+). The enzyme catalyses CDP-alpha-D-glucose + D-glucose 6-phosphate = alpha,alpha-trehalose 6-phosphate + CDP + H(+). It carries out the reaction GDP-alpha-D-glucose + D-glucose 6-phosphate = alpha,alpha-trehalose 6-phosphate + GDP + H(+). The catalysed reaction is TDP-alpha-D-glucose + D-glucose 6-phosphate = 5-methyl-UDP + alpha,alpha-trehalose 6-phosphate + H(+). It catalyses the reaction D-glucose 6-phosphate + UDP-alpha-D-glucose = alpha,alpha-trehalose 6-phosphate + UDP + H(+). It functions in the pathway glycan biosynthesis; trehalose biosynthesis. In terms of biological role, probably involved in the osmoprotection via the biosynthesis of trehalose and in the production of glycogen and alpha-glucan via the TreS-Pep2 branch involved in the biosynthesis of maltose-1-phosphate (M1P). Catalyzes the transfer of glucose from UDP-glucose (UDP-Glc) to D-glucose 6-phosphate (Glc-6-P) to form trehalose-6-phosphate. Probably also able to use ADP-Glc, CDP-Glc, GDP-Glc and TDP-Glc as glucosyl donors. The protein is Trehalose-6-phosphate synthase of Mycobacterium ulcerans (strain Agy99).